Consider the following 206-residue polypeptide: Large ribosomal subunit protein uL4 (206 aa).

The disordered stretch occupies residues 63-93; sequence MYKQKGTGRARHHSARAPQFRGGGKAHGPVV. The segment covering 64 to 77 has biased composition (basic residues); the sequence is YKQKGTGRARHHSA.

This sequence belongs to the universal ribosomal protein uL4 family. In terms of assembly, part of the 50S ribosomal subunit.

Its function is as follows. One of the primary rRNA binding proteins, this protein initially binds near the 5'-end of the 23S rRNA. It is important during the early stages of 50S assembly. It makes multiple contacts with different domains of the 23S rRNA in the assembled 50S subunit and ribosome. In terms of biological role, forms part of the polypeptide exit tunnel. This Rhizobium meliloti (strain 1021) (Ensifer meliloti) protein is Large ribosomal subunit protein uL4.